Reading from the N-terminus, the 178-residue chain is ATP synthase subunit b, chloroplastic (178 aa).

The chain crosses the membrane as a helical span at residues 26–46 (TNLINIIILLIILFYFLKGLL).

Belongs to the ATPase B chain family. In terms of assembly, F-type ATPases have 2 components, F(1) - the catalytic core - and F(0) - the membrane proton channel. F(1) has five subunits: alpha(3), beta(3), gamma(1), delta(1), epsilon(1). F(0) has four main subunits: a(1), b(1), b'(1) and c(10-14). The alpha and beta chains form an alternating ring which encloses part of the gamma chain. F(1) is attached to F(0) by a central stalk formed by the gamma and epsilon chains, while a peripheral stalk is formed by the delta, b and b' chains.

It localises to the plastid. Its subcellular location is the chloroplast thylakoid membrane. F(1)F(0) ATP synthase produces ATP from ADP in the presence of a proton or sodium gradient. F-type ATPases consist of two structural domains, F(1) containing the extramembraneous catalytic core and F(0) containing the membrane proton channel, linked together by a central stalk and a peripheral stalk. During catalysis, ATP synthesis in the catalytic domain of F(1) is coupled via a rotary mechanism of the central stalk subunits to proton translocation. Functionally, component of the F(0) channel, it forms part of the peripheral stalk, linking F(1) to F(0). This chain is ATP synthase subunit b, chloroplastic, found in Vaucheria litorea (Yellow-green alga).